A 590-amino-acid chain; its full sequence is Putative laccase-19 (590 aa).

An N-terminal signal peptide occupies residues 1–28 (MEKLSMVTSLLCAITVAVLAVAVVSGEA). Plastocyanin-like domains lie at 36-152 (VVHE…PRDG) and 161-315 (KDVP…YAGA). Asn-41 and Asn-47 each carry an N-linked (GlcNAc...) asparagine glycan. Residues His-86 and His-88 each contribute to the Cu cation site. Asn-120 carries N-linked (GlcNAc...) asparagine glycosylation. 2 residues coordinate Cu cation: His-131 and His-133. N-linked (GlcNAc...) asparagine glycans are attached at residues Asn-205, Asn-344, Asn-378, Asn-397, Asn-434, and Asn-465. The 143-residue stretch at 424-566 (DFPIRPPRPF…ATAFIVEDGP (143 aa)) folds into the Plastocyanin-like 3 domain. Cu cation is bound by residues Asn-483, His-486, His-488, His-545, Cys-546, His-547, His-551, and Met-556. The segment at 565–590 (GPTPETSLPPPPPEFKRCGNNGLSQP) is disordered.

Belongs to the multicopper oxidase family. The cofactor is Cu cation.

The protein localises to the secreted. The protein resides in the extracellular space. It is found in the apoplast. The enzyme catalyses 4 hydroquinone + O2 = 4 benzosemiquinone + 2 H2O. Functionally, lignin degradation and detoxification of lignin-derived products. This Oryza sativa subsp. indica (Rice) protein is Putative laccase-19 (LAC19).